The following is a 292-amino-acid chain: 33 kDa chaperonin (292 aa).

2 disulfides stabilise this stretch: cysteine 230–cysteine 232 and cysteine 263–cysteine 266.

It belongs to the HSP33 family. Under oxidizing conditions two disulfide bonds are formed involving the reactive cysteines. Under reducing conditions zinc is bound to the reactive cysteines and the protein is inactive.

Its subcellular location is the cytoplasm. In terms of biological role, redox regulated molecular chaperone. Protects both thermally unfolding and oxidatively damaged proteins from irreversible aggregation. Plays an important role in the bacterial defense system toward oxidative stress. The protein is 33 kDa chaperonin of Salmonella paratyphi A (strain ATCC 9150 / SARB42).